The chain runs to 395 residues: Phosphoglycerate kinase (395 aa).

Residues 22–24 (DFN), Arg38, 61–64 (HLGR), Arg119, and Arg152 contribute to the substrate site. ATP-binding positions include Lys203, Gly294, Glu325, and 351 to 354 (GGDT).

It belongs to the phosphoglycerate kinase family. Monomer.

The protein localises to the cytoplasm. It carries out the reaction (2R)-3-phosphoglycerate + ATP = (2R)-3-phospho-glyceroyl phosphate + ADP. It participates in carbohydrate degradation; glycolysis; pyruvate from D-glyceraldehyde 3-phosphate: step 2/5. The chain is Phosphoglycerate kinase from Hydrogenobaculum sp. (strain Y04AAS1).